The primary structure comprises 62 residues: uncharacterized protein (62 aa).

This is an uncharacterized protein from Caenorhabditis elegans.